The chain runs to 410 residues: Arginine biosynthesis bifunctional protein ArgJ (410 aa).

Substrate-binding residues include Thr-160, Lys-186, Thr-197, Glu-283, Asn-405, and Thr-410. Thr-197 functions as the Nucleophile in the catalytic mechanism.

This sequence belongs to the ArgJ family. As to quaternary structure, heterotetramer of two alpha and two beta chains.

Its subcellular location is the cytoplasm. It catalyses the reaction N(2)-acetyl-L-ornithine + L-glutamate = N-acetyl-L-glutamate + L-ornithine. It carries out the reaction L-glutamate + acetyl-CoA = N-acetyl-L-glutamate + CoA + H(+). It functions in the pathway amino-acid biosynthesis; L-arginine biosynthesis; L-ornithine and N-acetyl-L-glutamate from L-glutamate and N(2)-acetyl-L-ornithine (cyclic): step 1/1. The protein operates within amino-acid biosynthesis; L-arginine biosynthesis; N(2)-acetyl-L-ornithine from L-glutamate: step 1/4. Catalyzes two activities which are involved in the cyclic version of arginine biosynthesis: the synthesis of N-acetylglutamate from glutamate and acetyl-CoA as the acetyl donor, and of ornithine by transacetylation between N(2)-acetylornithine and glutamate. This chain is Arginine biosynthesis bifunctional protein ArgJ, found in Geobacillus kaustophilus (strain HTA426).